A 515-amino-acid chain; its full sequence is 2,3-bisphosphoglycerate-independent phosphoglycerate mutase (515 aa).

The Mn(2+) site is built by aspartate 14 and serine 64. The active-site Phosphoserine intermediate is the serine 64. Substrate contacts are provided by residues histidine 125, 155–156 (RD), arginine 187, arginine 193, 263–266 (RADR), and lysine 337. Residues aspartate 404, histidine 408, aspartate 445, histidine 446, and histidine 464 each contribute to the Mn(2+) site.

The protein belongs to the BPG-independent phosphoglycerate mutase family. Monomer. Requires Mn(2+) as cofactor.

It catalyses the reaction (2R)-2-phosphoglycerate = (2R)-3-phosphoglycerate. It functions in the pathway carbohydrate degradation; glycolysis; pyruvate from D-glyceraldehyde 3-phosphate: step 3/5. Catalyzes the interconversion of 2-phosphoglycerate and 3-phosphoglycerate. The polypeptide is 2,3-bisphosphoglycerate-independent phosphoglycerate mutase (Pseudomonas paraeruginosa (strain DSM 24068 / PA7) (Pseudomonas aeruginosa (strain PA7))).